The sequence spans 278 residues: HTH-type transcriptional activator RhaS (278 aa).

One can recognise an HTH araC/xylS-type domain in the interval 174-272; that stretch reads NLLLAWLEDH…NWSPRDIRQG (99 aa). DNA-binding regions (H-T-H motif) lie at residues 191-212 and 239-262; these read DAVA…KQQT and VTDI…HREF.

In terms of assembly, binds DNA as a dimer.

It is found in the cytoplasm. Activates expression of the rhaBAD and rhaT operons. This is HTH-type transcriptional activator RhaS from Shigella boydii serotype 18 (strain CDC 3083-94 / BS512).